The primary structure comprises 513 residues: ATP synthase subunit alpha 1 (513 aa).

169–176 (GDRQTGKT) provides a ligand contact to ATP.

The protein belongs to the ATPase alpha/beta chains family. In terms of assembly, F-type ATPases have 2 components, CF(1) - the catalytic core - and CF(0) - the membrane proton channel. CF(1) has five subunits: alpha(3), beta(3), gamma(1), delta(1), epsilon(1). CF(0) has three main subunits: a(1), b(2) and c(9-12). The alpha and beta chains form an alternating ring which encloses part of the gamma chain. CF(1) is attached to CF(0) by a central stalk formed by the gamma and epsilon chains, while a peripheral stalk is formed by the delta and b chains.

The protein resides in the cell inner membrane. It carries out the reaction ATP + H2O + 4 H(+)(in) = ADP + phosphate + 5 H(+)(out). Its function is as follows. Produces ATP from ADP in the presence of a proton gradient across the membrane. The alpha chain is a regulatory subunit. The protein is ATP synthase subunit alpha 1 of Photobacterium profundum (strain SS9).